A 412-amino-acid chain; its full sequence is MSVANLKDLLAEGVSGRGVLVRSDLNVPLDEDGTITDAGRIIASAPTLKALLDADAKVVVAAHLGRPKDGPDPTLSLAPVAVALGEQLGRHVQLAGDVVGADALARAEGLTGGDILLLENIRFDKRETSKNDDDRRALAKQLVELVGTGGVFVSDGFGVVHRKQASVYDIATLLPHYAGTLVADEMRVLEQLTSSTQRPYAVVLGGSKVSDKLGVIESLATKADSIVIGGGMCFTFLAAQGFSVGTSLLEDDMIEVCRGLLETYHDVLRLPVDLVVTEKFAADSPPQTVDVGAVPNGLMGLDIGPGSIKRFSTLLSNAGTIFWNGPMGVFEFPAYAAGTRGVAEAIVAATGKGAFSVVGGGDSAAAVRAMNIPEGAFSHISTGGGASLEYLEGKTLPGIEVLSREQPTGGVL.

Substrate is bound by residues aspartate 24–asparagine 26, arginine 40, histidine 63–arginine 66, arginine 122, and arginine 162. ATP-binding positions include lysine 212, glycine 300, glutamate 331, and glycine 360 to serine 363.

Belongs to the phosphoglycerate kinase family. In terms of assembly, monomer.

It is found in the cytoplasm. The catalysed reaction is (2R)-3-phosphoglycerate + ATP = (2R)-3-phospho-glyceroyl phosphate + ADP. Its pathway is carbohydrate degradation; glycolysis; pyruvate from D-glyceraldehyde 3-phosphate: step 2/5. The sequence is that of Phosphoglycerate kinase (pgk) from Mycobacterium bovis (strain ATCC BAA-935 / AF2122/97).